The primary structure comprises 314 residues: Malate dehydrogenase (314 aa).

NAD(+) contacts are provided by residues 11-16 and D35; that span reads GSGNIG. Substrate-binding residues include R84 and R90. NAD(+)-binding positions include N97 and 120-122; that span reads ITN. Substrate-binding residues include N122 and R153. The active-site Proton acceptor is the H177.

It belongs to the LDH/MDH superfamily. MDH type 3 family.

The enzyme catalyses (S)-malate + NAD(+) = oxaloacetate + NADH + H(+). Its function is as follows. Catalyzes the reversible oxidation of malate to oxaloacetate. The sequence is that of Malate dehydrogenase from Rickettsia conorii (strain ATCC VR-613 / Malish 7).